A 332-amino-acid polypeptide reads, in one-letter code: Ephrin-B2a (332 aa).

Residues 1 to 24 form the signal peptide; that stretch reads MGDSLWRYYFGVLVIACKVNLSRA. N-linked (GlcNAc...) asparagine glycosylation is found at N20 and N33. One can recognise an Ephrin RBD domain in the interval 25–161; the sequence is LILDSIYWNT…TKSMKIIMKV (137 aa). Residues 25–225 lie on the Extracellular side of the membrane; sequence LILDSIYWNT…VIGSEVALFA (201 aa). Intrachain disulfides connect C59–C98 and C86–C150. N-linked (GlcNAc...) asparagine glycosylation is present at N136. A disordered region spans residues 162 to 212; sequence GQNPSDPISPKDYPTSYPPKHPDLGGKDSKSNEVLKPDASPHGEDKGDGNK. Over residues 181–210 the composition is skewed to basic and acidic residues; sequence KHPDLGGKDSKSNEVLKPDASPHGEDKGDG. N-linked (GlcNAc...) asparagine glycosylation occurs at N211. A helical transmembrane segment spans residues 226 to 246; the sequence is CIASASVIVIIIIIMLVFLLL. The Cytoplasmic portion of the chain corresponds to 247–332; sequence KYRRRHRKHS…QSPANIYYKV (86 aa). Residues 255 to 285 form a disordered region; that stretch reads HSPQHATTLSLSTLATPKRGGSGGNNNGSEP. Residues 260-270 show a composition bias toward low complexity; sequence ATTLSLSTLAT. Residues 330 to 332 carry the PDZ-binding motif; sequence YKV.

The protein belongs to the ephrin family. Binds to the receptor tyrosine kinase ephb4. Inducible phosphorylation of tyrosine residues in the cytoplasmic domain.

The protein localises to the cell membrane. Cell surface transmembrane ligand for Eph receptors, a family of receptor tyrosine kinases which are crucial for migration, repulsion and adhesion during neuronal, vascular and epithelial development. Binds promiscuously Eph receptors residing on adjacent cells, leading to contact-dependent bidirectional signaling into neighboring cells. The signaling pathway downstream of the receptor is referred to as forward signaling while the signaling pathway downstream of the ephrin ligand is referred to as reverse signaling. Together with ephb4 may play a central role in heart morphogenesis and angiogenesis through regulation of cell adhesion and cell migration. This Danio rerio (Zebrafish) protein is Ephrin-B2a (efnb2a).